The chain runs to 862 residues: Axin-1 (862 aa).

Residues 1-78 form a disordered region; it reads MNIQEQGFPL…GYEPEGSASP (78 aa). The short motif at 20–29 is the Tankyrase-binding motif element; it reads APRPPVPGEE. Residues Ser-75 and Ser-77 each carry the phosphoserine; by CK1 modification. One can recognise an RGS domain in the interval 88-211; the sequence is SLHSLLDDQD…LKSDIYLEYT (124 aa). The segment at 209–338 is interaction with TP53; that stretch reads EYTRTGSESP…DADTLSLTDS (130 aa). Disordered stretches follow at residues 215–289 and 316–344; these read SESP…YSEG and TSANDSEQQSLSSDADTLSLTDSSVDGIP. Ser-217 is subject to Phosphoserine; by CK1. Residues 242 to 258 show a composition bias toward acidic residues; it reads NEDEEWKCDQDMDEDDG. The segment covering 325 to 339 has biased composition (low complexity); it reads SLSSDADTLSLTDSS. The tract at residues 348-433 is interaction with GSK3B; sequence IRKQHRREMQ…DGDPSSGPPG (86 aa). Residues 353–411 form an interaction with SIAH1 and SIAH2 region; sequence RREMQESVQVNGRVPLPHIPRTYRVPKEVRVEPQKFAEELIHRLEAVQRTREAEEKLEE. A disordered region spans residues 413 to 441; it reads LKRVRMEEEGEDGDPSSGPPGPCHKLPPA. Residues 429 to 441 are compositionally biased toward pro residues; it reads SGPPGPCHKLPPA. Positions 434-502 are interaction with CTNNB1; sequence PCHKLPPAPA…SPDSGHVAKM (69 aa). At Ser-469 the chain carries Phosphoserine; by CK1. A disordered region spans residues 480-500; that stretch reads RTPGRQSPGPGHRSPDSGHVA. Thr-481 carries the phosphothreonine; by GSK3-beta modification. Phosphoserine occurs at positions 486, 493, and 511. The interval 507-757 is interaction with RNF111; the sequence is GGAASGHGKH…PVLHVVPAVS (251 aa). A compositionally biased stretch (basic residues) spans 531–544; that stretch reads HHRHVHHHVHHSTA. Disordered stretches follow at residues 531–629 and 641–679; these read HHRH…AEKN and KEISRHRRTGHGSSGTRKPQPHENSRPLSLEHPWAGPQL. The span at 545–556 shows a compositional bias: basic and acidic residues; the sequence is RPKEQVEAEATR. Residues 575–789 are interaction with PPP2CA; it reads SRGYSESVGA…CDSIVVAYYF (215 aa). Ser-581 carries the phosphoserine modification. The interaction with HIPK2 stretch occupies residues 677–752; the sequence is PQLRTSVQPS…RPACAPVLHV (76 aa). The 83-residue stretch at 780-862 folds into the DIX domain; that stretch reads CDSIVVAYYF…KIIGKVEKVD (83 aa). Residues Lys-857 and Lys-860 each participate in a glycyl lysine isopeptide (Lys-Gly) (interchain with G-Cter in SUMO) cross-link.

In terms of assembly, homodimer. Interacts with ZBED3; the interaction is direct, enhanced by protein kinase GSK3B and casein kinase CSNK1E activities and decreases GSK3B-induced beta-catenin serine and threonine phosphorylations. Component of the beta-catenin destruction complex, containing at least, CTNNB1, an axin and GSK3B, that regulates CTNNB1 protein levels through phosphorylation and ubiquitination. Interacts with CTNNB1 (via the armadillo repeats 2-7). Interacts with GSK3B; the interaction hyperphosphorylates CTNNB1 leading to its ubiquitination and destruction. Component of the AXIN1-HIPK2-TP53 complex. Interacts directly in the complex with TP53 and HIPK2. Interacts with DAXX; the interaction stimulates the interaction of DAXX with TP53, stimulates 'Ser-46' phosphorylation of TP53 and induces cell death on UV irradiation. Also binds APC, SMAD6, SMAD7 and RNF111. Interacts with DIXDC1; prevents interaction with MAP3K1. Interacts with MAP3K4. Interacts with ANKRD6 and AIDA. Interacts with MDFI; the interaction decreases AXIN1-mediated JUN N-terminal kinase (JNK) activation. Interacts with MDFIC; the interaction inhibits beta-cateninin-mediated signaling and AXIN1-mediated JUN N-terminal kinase (JNK) activation. Interacts with LRP5 (via its phosphorylated PPPSP motifs); the interaction is stimulated by WNT1 and GSK3B and activates beta-catenin signaling. Interacts (via the C-terminal) with PPP1CA; the interaction dephosphorylates AXIN1 and regulates interaction with GSK3B. Interacts with PPP2CA; the interaction dephosphorylates AXIN1. Interacts with MACF1. Found in a complex composed of MACF1, APC, AXIN1, CTNNB1 and GSK3B. Interacts with TNKS. Interacts with DAB2; the interaction is mutually exclusive with the AXIN1:PPP1CA interaction. Interacts with WDR26. Interacts with GID8. Interacts with SIAH1 and SIAH2; both probably catalyze AXIN1 ubiquitination and subsequent proteasome-mediated ubiquitin-dependent degradation. Interaction with GSK3B and AXIN1 is competitive. In terms of processing, phosphorylation and dephosphorylation of AXIN1 regulates assembly and function of the beta-catenin complex. Phosphorylated by CK1 and GSK3B. Dephosphorylated by PPP1CA and PPP2CA. Phosphorylation by CK1 enhances binding of GSK3B to AXIN1. ADP-ribosylated by tankyrase TNKS and TNKS2. Poly-ADP-ribosylated protein is recognized by RNF146, followed by ubiquitination at 'Lys-48' and subsequent activation of the Wnt signaling pathway. Post-translationally, ubiquitinated by RNF146 when poly-ADP-ribosylated, leading to its degradation and subsequent activation of the Wnt signaling pathway. Sumoylation at Lys-857 and Lys-860 prevents ubiquitination and degradation. Sumoylation is required for AXIN1-mediated JNK activation. Deubiquitinated by USP34, deubiquitinated downstream of beta-catenin stabilization step: deubiquitination is important for nuclear accumulation during Wnt signaling to positively regulate beta-catenin (CTNBB1)-mediated transcription. Ubiquitination by SIAH1 and SIAH2 induces its proteasomal degradation as part of the activation of the Wnt signaling pathway. In terms of tissue distribution, ubiquitously expressed.

It localises to the cytoplasm. Its subcellular location is the nucleus. It is found in the membrane. The protein localises to the cell membrane. In terms of biological role, component of the beta-catenin destruction complex required for regulating CTNNB1 levels through phosphorylation and ubiquitination, and modulating Wnt-signaling. Controls dorsoventral patterning via two opposing effects; down-regulates CTNNB1 to inhibit the Wnt signaling pathway and ventralize embryos, but also dorsalizes embryos by activating a Wnt-independent JNK signaling pathway. In Wnt signaling, probably facilitates the phosphorylation of CTNNB1 and APC by GSK3B. Likely to function as a tumor suppressor. Enhances TGF-beta signaling by recruiting the RNF111 E3 ubiquitin ligase and promoting the degradation of inhibitory SMAD7. Also a component of the AXIN1-HIPK2-TP53 complex which controls cell growth, apoptosis and development. Facilitates the phosphorylation of TP53 by HIPK2 upon ultraviolet irradiation. This chain is Axin-1 (AXIN1), found in Homo sapiens (Human).